A 556-amino-acid polypeptide reads, in one-letter code: (6-4)DNA photolyase (556 aa).

The region spanning S24–L162 is the Photolyase/cryptochrome alpha/beta domain. Residue E262 coordinates phosphate. FAD is bound by residues K263, T276–S280, Q317–R321, W380–H383, R386, D415–D417, and N421. Residue W320 participates in DNA binding. The interaction with DNA stretch occupies residues H382–H387. A DNA-binding site is contributed by W427. Residues L534–K556 are disordered. The span at Q539 to I548 shows a compositional bias: basic and acidic residues.

Belongs to the DNA photolyase class-1 family. Requires FAD as cofactor. In terms of tissue distribution, expressed in siliques, flowers and leaves. Not detected in roots.

The catalysed reaction is (6-4) photoproduct (in DNA) = 2 pyrimidine residues (in DNA).. Functionally, involved in repair of UV radiation-induced DNA damage. Catalyzes the photoreactivation of pyrimidine [6-4] pyrimidone photoproduct (6-4 products). Binds specifically to DNA containing 6-4 products and repairs these lesions in a visible light-dependent manner. Not required for repair of cyclobutane pyrimidine dimer (CPD). This is (6-4)DNA photolyase (UVR3) from Arabidopsis thaliana (Mouse-ear cress).